The primary structure comprises 342 residues: tRNA N6-adenosine threonylcarbamoyltransferase (342 aa).

The Fe cation site is built by H115 and H119. Residues 138–142 (LVSGG), D171, G184, and N276 contribute to the substrate site. D304 contributes to the Fe cation binding site.

Belongs to the KAE1 / TsaD family. It depends on Fe(2+) as a cofactor.

It is found in the cytoplasm. It carries out the reaction L-threonylcarbamoyladenylate + adenosine(37) in tRNA = N(6)-L-threonylcarbamoyladenosine(37) in tRNA + AMP + H(+). Required for the formation of a threonylcarbamoyl group on adenosine at position 37 (t(6)A37) in tRNAs that read codons beginning with adenine. Is involved in the transfer of the threonylcarbamoyl moiety of threonylcarbamoyl-AMP (TC-AMP) to the N6 group of A37, together with TsaE and TsaB. TsaD likely plays a direct catalytic role in this reaction. The polypeptide is tRNA N6-adenosine threonylcarbamoyltransferase (Dichelobacter nodosus (strain VCS1703A)).